We begin with the raw amino-acid sequence, 1225 residues long: ABC transporter B family member 18 (1225 aa).

Helical transmembrane passes span 23–43 (MALGLIGAVGDGFITPIIFFI), 70–90 (VALVYVACASWVICFIEGYCW), 146–168 (LPNFLMNTSAFVASYIVGFLLLW), 172–194 (IVGFPFIILLLIPGLMYGRALIR), 252–272 (GIAIGSNGITYAIWGFLTWYG), and 284–304 (GTVSSVIVCVTFGGTSLGQSL). In terms of domain architecture, ABC transmembrane type-1 1 spans 23–312 (MALGLIGAVG…SLSNLKYFSE (290 aa)). Positions 347-583 (VEFNHVKFTY…LDGQYTSLVR (237 aa)) constitute an ABC transporter 1 domain. Residue 382–389 (GGSGSGKS) coordinates ATP. Asn-530 carries N-linked (GlcNAc...) asparagine glycosylation. Helical transmembrane passes span 657 to 677 (ALYGCLGAALFGAVQPIYSYS) and 699 to 719 (IYVLLFVGLALFTFLSNISQH). Residues 657 to 945 (ALYGCLGAAL…AGTMTKDLVK (289 aa)) form the ABC transmembrane type-1 2 domain. Residue Asn-754 is glycosylated (N-linked (GlcNAc...) asparagine). 4 helical membrane passes run 780 to 800 (LLVQTISAVSITCAIGLVISW), 804 to 824 (IVMMSVQPVIVVCFYTQRVLL), 880 to 900 (SWLAGIMLGTSQSLITCVSAL), and 919 to 939 (FLEIFLIFASTGRVIAEAGTM). N-linked (GlcNAc...) asparagine glycosylation is found at Asn-960 and Asn-1000. In terms of domain architecture, ABC transporter 2 spans 980 to 1218 (ISFSNVDFAY…GPKGAYFSLV (239 aa)). ATP is bound at residue 1015 to 1022 (GPSGSGKS). Residue Asn-1201 is glycosylated (N-linked (GlcNAc...) asparagine).

It belongs to the ABC transporter superfamily. ABCB family. Multidrug resistance exporter (TC 3.A.1.201) subfamily.

Its subcellular location is the membrane. This is ABC transporter B family member 18 (ABCB18) from Arabidopsis thaliana (Mouse-ear cress).